The following is a 408-amino-acid chain: UPF0754 membrane protein Tery_3973 (408 aa).

A run of 2 helical transmembrane segments spans residues 4-24 (IWLY…TNDI) and 385-405 (IVNL…ILLV).

It belongs to the UPF0754 family.

The protein resides in the cell inner membrane. The chain is UPF0754 membrane protein Tery_3973 from Trichodesmium erythraeum (strain IMS101).